A 508-amino-acid chain; its full sequence is Photosystem II CP47 reaction center protein (508 aa).

Helical transmembrane passes span 21-36 (SVHI…WAGS), 101-115 (IILA…MWHW), 140-156 (GIHL…FGAF), 203-218 (IAAG…FHLS), 237-252 (VLSS…AFVV), and 457-472 (CFAL…HGAR).

This sequence belongs to the PsbB/PsbC family. PsbB subfamily. As to quaternary structure, PSII is composed of 1 copy each of membrane proteins PsbA, PsbB, PsbC, PsbD, PsbE, PsbF, PsbH, PsbI, PsbJ, PsbK, PsbL, PsbM, PsbT, PsbX, PsbY, PsbZ, Psb30/Ycf12, at least 3 peripheral proteins of the oxygen-evolving complex and a large number of cofactors. It forms dimeric complexes. The cofactor is Binds multiple chlorophylls. PSII binds additional chlorophylls, carotenoids and specific lipids..

Its subcellular location is the plastid. The protein localises to the chloroplast thylakoid membrane. One of the components of the core complex of photosystem II (PSII). It binds chlorophyll and helps catalyze the primary light-induced photochemical processes of PSII. PSII is a light-driven water:plastoquinone oxidoreductase, using light energy to abstract electrons from H(2)O, generating O(2) and a proton gradient subsequently used for ATP formation. The sequence is that of Photosystem II CP47 reaction center protein from Mesostigma viride (Green alga).